The following is a 254-amino-acid chain: Alcohol dehydrogenase (254 aa).

10 to 33 provides a ligand contact to NAD(+); sequence FVAGLGGIGLDTSRELVKRDLKNL. Ser138 is a binding site for substrate. Tyr151 functions as the Proton acceptor in the catalytic mechanism.

This sequence belongs to the short-chain dehydrogenases/reductases (SDR) family. As to quaternary structure, homodimer.

It carries out the reaction a primary alcohol + NAD(+) = an aldehyde + NADH + H(+). It catalyses the reaction a secondary alcohol + NAD(+) = a ketone + NADH + H(+). The polypeptide is Alcohol dehydrogenase (Adh) (Drosophila madeirensis (Fruit fly)).